Here is a 471-residue protein sequence, read N- to C-terminus: Cysteine--tRNA ligase (471 aa).

C30 contributes to the Zn(2+) binding site. The 'HIGH' region signature appears at P32–N42. Residues C212, H237, and E241 each contribute to the Zn(2+) site. Positions K270–S274 match the 'KMSKS' region motif. K273 contacts ATP.

This sequence belongs to the class-I aminoacyl-tRNA synthetase family. Monomer. Zn(2+) serves as cofactor.

It is found in the cytoplasm. It carries out the reaction tRNA(Cys) + L-cysteine + ATP = L-cysteinyl-tRNA(Cys) + AMP + diphosphate. This is Cysteine--tRNA ligase from Leptospira interrogans serogroup Icterohaemorrhagiae serovar copenhageni (strain Fiocruz L1-130).